We begin with the raw amino-acid sequence, 424 residues long: Glutamate-1-semialdehyde 2,1-aminomutase (424 aa).

Lys266 carries the post-translational modification N6-(pyridoxal phosphate)lysine.

This sequence belongs to the class-III pyridoxal-phosphate-dependent aminotransferase family. HemL subfamily. Homodimer. Pyridoxal 5'-phosphate is required as a cofactor.

The protein localises to the cytoplasm. The enzyme catalyses (S)-4-amino-5-oxopentanoate = 5-aminolevulinate. Its pathway is porphyrin-containing compound metabolism; protoporphyrin-IX biosynthesis; 5-aminolevulinate from L-glutamyl-tRNA(Glu): step 2/2. The protein is Glutamate-1-semialdehyde 2,1-aminomutase of Azoarcus sp. (strain BH72).